Consider the following 124-residue polypeptide: Large ribosomal subunit protein bL12 (124 aa).

The segment covering 102-116 (MSKEDAEAAKTKLEE) has biased composition (basic and acidic residues). The disordered stretch occupies residues 102–124 (MSKEDAEAAKTKLEEAGASVELK).

Belongs to the bacterial ribosomal protein bL12 family. Homodimer. Part of the ribosomal stalk of the 50S ribosomal subunit. Forms a multimeric L10(L12)X complex, where L10 forms an elongated spine to which 2 to 4 L12 dimers bind in a sequential fashion. Binds GTP-bound translation factors.

Forms part of the ribosomal stalk which helps the ribosome interact with GTP-bound translation factors. Is thus essential for accurate translation. The protein is Large ribosomal subunit protein bL12 of Chromohalobacter salexigens (strain ATCC BAA-138 / DSM 3043 / CIP 106854 / NCIMB 13768 / 1H11).